The primary structure comprises 264 residues: uncharacterized protein (264 aa).

A helical transmembrane segment spans residues L7–T27.

This sequence belongs to the staphylococcal tandem lipoprotein family.

The protein localises to the cell membrane. This is an uncharacterized protein from Staphylococcus aureus (strain MRSA252).